Consider the following 123-residue polypeptide: MRFWSLFLLVVLLAVGGQLPAASGRKKGERAGACPPEDGPCVISVPDQCQEDSQCPSTMKCCFQACFRHCVPRILVKRGGCPEDQLQCLSPTEHLCNKDSDCSGKKRCCHTSCGRECRDPARG.

A signal peptide spans 1–24 (MRFWSLFLLVVLLAVGGQLPAASG). WAP domains are found at residues 27-74 (KGER…VPRI) and 75-121 (LVKR…RDPA). 8 cysteine pairs are disulfide-bonded: C34–C62, C41–C66, C49–C61, C55–C70, C81–C109, C88–C113, C96–C108, and C102–C117.

It localises to the secreted. Putative acid-stable proteinase inhibitor. The protein is WAP four-disulfide core domain protein 5 (WFDC5) of Lemur catta (Ring-tailed lemur).